A 176-amino-acid chain; its full sequence is Dual-action ribosomal maturation protein DarP (176 aa).

It belongs to the DarP family.

The protein localises to the cytoplasm. Functionally, member of a network of 50S ribosomal subunit biogenesis factors which assembles along the 30S-50S interface, preventing incorrect 23S rRNA structures from forming. Promotes peptidyl transferase center (PTC) maturation. The sequence is that of Dual-action ribosomal maturation protein DarP from Aliivibrio fischeri (strain MJ11) (Vibrio fischeri).